We begin with the raw amino-acid sequence, 106 residues long: MYAVLKSGGRQYEVRPGQVVKVEKLLGEVGDKVTLDQVLLFSDGTDIQVGQPVLANIAVQGQIVEQGRHRKIVIFKHKRRKDYRKKQGHRQHYTAVRVEEIVTLGQ.

The protein belongs to the bacterial ribosomal protein bL21 family. As to quaternary structure, part of the 50S ribosomal subunit. Contacts protein L20.

This protein binds to 23S rRNA in the presence of protein L20. The sequence is that of Large ribosomal subunit protein bL21 from Syntrophobacter fumaroxidans (strain DSM 10017 / MPOB).